The following is a 71-amino-acid chain: Stathmin-1-B (71 aa).

The stretch at 1 to 67 (KREHEKEVLQ…EIRKGKECKE (67 aa)) forms a coiled coil. The SLD domain occupies 1–71 (KREHEKEVLQ…GKECKEPSED (71 aa)).

This sequence belongs to the stathmin family. As to quaternary structure, binds to two alpha/beta-tubulin heterodimers. In terms of processing, from unphosphorylated forms to highly phosphorylated ones in the mature egg, followed by progressive dephosphorylation from the mid-blastula to the tailbud stage. In terms of tissue distribution, ubiquitous. Mostly abundant in brain and oocytes.

It is found in the cytoplasm. The protein localises to the cytoskeleton. Involved in the regulation of the microtubule (MT) filament system by destabilizing microtubules. It prevents assembly and promotes disassembly of microtubules. The chain is Stathmin-1-B (stmn1-b) from Xenopus laevis (African clawed frog).